Consider the following 290-residue polypeptide: uncharacterized protein (290 aa).

The next 5 membrane-spanning stretches (helical) occupy residues 10 to 27 (FFVA…LLLI), 32 to 54 (VNYI…YFFS), 69 to 91 (ILVP…GVLI), 100 to 117 (VLAG…FFYF), and 121 to 143 (YLLM…NFEY). The stretch at 147–183 (VGKERKRILKLKKNYHKLLKEFSNFEREKRMFSNLRK) forms a coiled coil.

The protein localises to the cell membrane. This is an uncharacterized protein from Aquifex aeolicus (strain VF5).